The primary structure comprises 134 residues: Profilin-5 (134 aa).

Residues C13 and C118 are joined by a disulfide bond. An Involved in PIP2 interaction motif is present at residues 84–100 (AVIRGKKGSGGITIKKT). Residue T114 is modified to Phosphothreonine.

Belongs to the profilin family. As to quaternary structure, occurs in many kinds of cells as a complex with monomeric actin in a 1:1 ratio. Phosphorylated by MAP kinases.

The protein resides in the cytoplasm. Its subcellular location is the cytoskeleton. In terms of biological role, binds to actin and affects the structure of the cytoskeleton. At high concentrations, profilin prevents the polymerization of actin, whereas it enhances it at low concentrations. The polypeptide is Profilin-5 (Olea europaea (Common olive)).